The chain runs to 158 residues: NAD(P)H-quinone oxidoreductase subunit J, chloroplastic (158 aa).

Belongs to the complex I 30 kDa subunit family. In terms of assembly, NDH is composed of at least 16 different subunits, 5 of which are encoded in the nucleus.

The protein resides in the plastid. It is found in the chloroplast thylakoid membrane. The enzyme catalyses a plastoquinone + NADH + (n+1) H(+)(in) = a plastoquinol + NAD(+) + n H(+)(out). It carries out the reaction a plastoquinone + NADPH + (n+1) H(+)(in) = a plastoquinol + NADP(+) + n H(+)(out). NDH shuttles electrons from NAD(P)H:plastoquinone, via FMN and iron-sulfur (Fe-S) centers, to quinones in the photosynthetic chain and possibly in a chloroplast respiratory chain. The immediate electron acceptor for the enzyme in this species is believed to be plastoquinone. Couples the redox reaction to proton translocation, and thus conserves the redox energy in a proton gradient. The protein is NAD(P)H-quinone oxidoreductase subunit J, chloroplastic of Olimarabidopsis pumila (Dwarf rocket).